Here is a 460-residue protein sequence, read N- to C-terminus: tRNA modification GTPase MnmE (460 aa).

(6S)-5-formyl-5,6,7,8-tetrahydrofolate is bound by residues R22, E83, and K122. Residues 219 to 381 (GIKTLIIGRP…LQQTILKKFQ (163 aa)) enclose the TrmE-type G domain. A K(+)-binding site is contributed by N229. GTP contacts are provided by residues 229–234 (NVGKSS), 248–254 (SDISGTT), and 273–276 (DTAG). Mg(2+) is bound at residue S233. The K(+) site is built by S248, I250, and T253. A Mg(2+)-binding site is contributed by T254. Position 460 (K460) interacts with (6S)-5-formyl-5,6,7,8-tetrahydrofolate.

This sequence belongs to the TRAFAC class TrmE-Era-EngA-EngB-Septin-like GTPase superfamily. TrmE GTPase family. Homodimer. Heterotetramer of two MnmE and two MnmG subunits. K(+) is required as a cofactor.

Its subcellular location is the cytoplasm. Functionally, exhibits a very high intrinsic GTPase hydrolysis rate. Involved in the addition of a carboxymethylaminomethyl (cmnm) group at the wobble position (U34) of certain tRNAs, forming tRNA-cmnm(5)s(2)U34. This is tRNA modification GTPase MnmE from Aster yellows witches'-broom phytoplasma (strain AYWB).